A 282-amino-acid chain; its full sequence is Putative hydrolase Bcen_5340 (282 aa).

Mg(2+)-binding residues include glutamate 124, glutamate 126, and aspartate 155.

The protein belongs to the FAH family. The cofactor is Mg(2+).

The chain is Putative hydrolase Bcen_5340 from Burkholderia orbicola (strain AU 1054).